The primary structure comprises 166 residues: Urease accessory protein UreE (166 aa).

It belongs to the UreE family.

It is found in the cytoplasm. Involved in urease metallocenter assembly. Binds nickel. Probably functions as a nickel donor during metallocenter assembly. This is Urease accessory protein UreE from Azotobacter vinelandii (strain DJ / ATCC BAA-1303).